The sequence spans 136 residues: Galectin-7 (136 aa).

Residues 6-136 enclose the Galectin domain; that stretch reads HKTPLPQGVR…DVQLHSVKIF (131 aa). 70-76 contributes to the a beta-D-galactoside binding site; sequence WGREERG.

As to quaternary structure, monomer.

Its subcellular location is the cytoplasm. It is found in the nucleus. The protein resides in the secreted. Could be involved in cell-cell and/or cell-matrix interactions necessary for normal growth control. Pro-apoptotic protein that functions intracellularly upstream of JNK activation and cytochrome c release. This chain is Galectin-7 (Lgals7), found in Rattus norvegicus (Rat).